A 330-amino-acid polypeptide reads, in one-letter code: ADP-L-glycero-D-manno-heptose-6-epimerase (330 aa).

NADP(+) is bound by residues 11-12 (FI), 32-33 (DN), K39, K54, 75-79 (EGACS), and N92. The Proton acceptor role is filled by Y139. An NADP(+)-binding site is contributed by K143. N168 serves as a coordination point for substrate. NADP(+)-binding residues include V169 and K177. Catalysis depends on K177, which acts as the Proton acceptor. Residues R179, H186, 200-203 (FGEY), R213, and Y292 contribute to the substrate site.

This sequence belongs to the NAD(P)-dependent epimerase/dehydratase family. HldD subfamily. As to quaternary structure, homopentamer. NADP(+) serves as cofactor.

The enzyme catalyses ADP-D-glycero-beta-D-manno-heptose = ADP-L-glycero-beta-D-manno-heptose. It participates in nucleotide-sugar biosynthesis; ADP-L-glycero-beta-D-manno-heptose biosynthesis; ADP-L-glycero-beta-D-manno-heptose from D-glycero-beta-D-manno-heptose 7-phosphate: step 4/4. Its function is as follows. Catalyzes the interconversion between ADP-D-glycero-beta-D-manno-heptose and ADP-L-glycero-beta-D-manno-heptose via an epimerization at carbon 6 of the heptose. This is ADP-L-glycero-D-manno-heptose-6-epimerase from Paraburkholderia phymatum (strain DSM 17167 / CIP 108236 / LMG 21445 / STM815) (Burkholderia phymatum).